Consider the following 75-residue polypeptide: UPF0291 protein Teth39_0326 (75 aa).

The protein belongs to the UPF0291 family.

It localises to the cytoplasm. In Thermoanaerobacter pseudethanolicus (strain ATCC 33223 / 39E) (Clostridium thermohydrosulfuricum), this protein is UPF0291 protein Teth39_0326.